The following is a 347-amino-acid chain: UPF0284 protein M164_0030 (347 aa).

The protein belongs to the UPF0284 family.

This Saccharolobus islandicus (strain M.16.4 / Kamchatka #3) (Sulfolobus islandicus) protein is UPF0284 protein M164_0030.